Here is a 350-residue protein sequence, read N- to C-terminus: Arabinogalactan endo-beta-1,4-galactanase A (350 aa).

A signal peptide spans 1–17 (MILSSLLPLSLVTLTSA). An N-linked (GlcNAc...) asparagine glycan is attached at asparagine 129. Glutamate 153 (proton donor) is an active-site residue. Glutamate 263 functions as the Nucleophile in the catalytic mechanism.

It belongs to the glycosyl hydrolase 53 family.

Its subcellular location is the secreted. It carries out the reaction The enzyme specifically hydrolyzes (1-&gt;4)-beta-D-galactosidic linkages in type I arabinogalactans.. In terms of biological role, endogalactanase involved in the degradation of plant cell wall polysaccharides, and more particularly of hairy regions of pectin. The sequence is that of Arabinogalactan endo-beta-1,4-galactanase A (galA) from Emericella nidulans (strain FGSC A4 / ATCC 38163 / CBS 112.46 / NRRL 194 / M139) (Aspergillus nidulans).